A 137-amino-acid polypeptide reads, in one-letter code: Protein Turandot X (137 aa).

The first 24 residues, 1 to 24 (MRVPVFQLSCLLGLIVCLLCSVKA), serve as a signal peptide directing secretion.

The protein belongs to the Turandot family.

It localises to the secreted. A humoral factor that may play a role in stress tolerance. In Drosophila pseudoobscura pseudoobscura (Fruit fly), this protein is Protein Turandot X.